A 420-amino-acid chain; its full sequence is 26S proteasome non-ATPase regulatory subunit 4 (420 aa).

The 174-residue stretch at 1 to 174 (MSQEATIIAV…TGSHLISVAP (174 aa)) folds into the VWFA domain. UIM domains follow at residues 210-229 (AEDP…QRMR), 255-274 (SEEA…NNTE), and 288-307 (SEED…MGEE). Positions 392–420 (RKAINALTKSQSQRGSKKDEKEDEDKQNS) are disordered. Residues 407-420 (SKKDEKEDEDKQNS) are compositionally biased toward basic and acidic residues.

The protein belongs to the proteasome subunit S5A family. The 26S proteasome is composed of a core protease, known as the 20S proteasome, capped at one or both ends by the 19S regulatory complex (RC). The RC is composed of at least 18 different subunits in two subcomplexes, the base and the lid, which form the portions proximal and distal to the 20S proteolytic core, respectively.

Binds and presumably selects ubiquitin-conjugates for destruction. The polypeptide is 26S proteasome non-ATPase regulatory subunit 4 (Schistosoma mansoni (Blood fluke)).